Here is an 82-residue protein sequence, read N- to C-terminus: RNA-binding protein Hfq (82 aa).

One can recognise a Sm domain in the interval 9–69; that stretch reads DQLLNTARKD…ISTIIPAKII (61 aa).

The protein belongs to the Hfq family. In terms of assembly, homohexamer.

In terms of biological role, RNA chaperone that binds small regulatory RNA (sRNAs) and mRNAs to facilitate mRNA translational regulation in response to envelope stress, environmental stress and changes in metabolite concentrations. Also binds with high specificity to tRNAs. The protein is RNA-binding protein Hfq of Leptospira borgpetersenii serovar Hardjo-bovis (strain L550).